The chain runs to 559 residues: Kelch repeat and BTB domain-containing protein 2 (559 aa).

Positions 26–95 (CDVIITIGDG…LYNRHISSMN (70 aa)) constitute a BTB domain. The region spanning 128-223 (CIYIYHRLYE…CIDIQNLDKK (96 aa)) is the BACK domain. Kelch repeat units follow at residues 305-352 (EIII…VIDD), 353-399 (MIYA…VFDQ), and 401-463 (IYII…SHKD).

As to quaternary structure, interacts (via BTB domain) with host CUL3.

The protein localises to the host cytoplasm. In terms of biological role, probable substrate-specific adapter of CUL3-containing E3 ubiquitin-protein ligases which mediate the ubiquitination and subsequent proteasomal degradation of host target proteins. This chain is Kelch repeat and BTB domain-containing protein 2 (KBTB2), found in Mus musculus (Mouse).